The following is a 699-amino-acid chain: Elongation factor G (699 aa).

One can recognise a tr-type G domain in the interval 8 to 283 (EHIRNIGICA…AVVDFLPSPI (276 aa)). GTP contacts are provided by residues 17 to 24 (AHIDAGKT), 81 to 85 (DTPGH), and 135 to 138 (NKMD).

Belongs to the TRAFAC class translation factor GTPase superfamily. Classic translation factor GTPase family. EF-G/EF-2 subfamily.

It localises to the cytoplasm. Its function is as follows. Catalyzes the GTP-dependent ribosomal translocation step during translation elongation. During this step, the ribosome changes from the pre-translocational (PRE) to the post-translocational (POST) state as the newly formed A-site-bound peptidyl-tRNA and P-site-bound deacylated tRNA move to the P and E sites, respectively. Catalyzes the coordinated movement of the two tRNA molecules, the mRNA and conformational changes in the ribosome. The sequence is that of Elongation factor G from Rickettsia felis (strain ATCC VR-1525 / URRWXCal2) (Rickettsia azadi).